Consider the following 307-residue polypeptide: UDP-N-acetylenolpyruvoylglucosamine reductase (307 aa).

Positions 34 to 199 (RVGGPAQVLF…TAVRFRGTPS (166 aa)) constitute an FAD-binding PCMH-type domain. The active site involves Arg179. Ser228 functions as the Proton donor in the catalytic mechanism. The active site involves Glu298.

It belongs to the MurB family. FAD serves as cofactor.

The protein resides in the cytoplasm. The enzyme catalyses UDP-N-acetyl-alpha-D-muramate + NADP(+) = UDP-N-acetyl-3-O-(1-carboxyvinyl)-alpha-D-glucosamine + NADPH + H(+). It functions in the pathway cell wall biogenesis; peptidoglycan biosynthesis. In terms of biological role, cell wall formation. This Bradyrhizobium sp. (strain ORS 278) protein is UDP-N-acetylenolpyruvoylglucosamine reductase.